The primary structure comprises 579 residues: Kelch repeat and BTB domain-containing protein F47D12.7 (579 aa).

Residues 51-119 enclose the BTB domain; sequence PTVTLVLRNN…PKAFEQGIKP (69 aa). Kelch repeat units lie at residues 266–316, 317–363, 369–415, 417–463, 465–511, and 513–559; these read AIVC…VVED, KLIV…RVND, LVFA…TIDN, IVAI…SIMN, VCMI…QMDT, and YVYV…TLSD.

In Caenorhabditis elegans, this protein is Kelch repeat and BTB domain-containing protein F47D12.7.